The primary structure comprises 617 residues: Bifunctional TH2 protein, mitochondrial (617 aa).

A mitochondrion-targeting transit peptide spans 1–28 (MRFLFPTRLINNSSLGLLRSPHTTAPIR). Position 107 (Asp-107) interacts with substrate. The active-site Nucleophile is Cys-213. Residues Tyr-217 and Tyr-244 each contribute to the substrate site. Glu-286 serves as the catalytic Proton donor.

It in the N-terminal section; belongs to the TenA family. In the C-terminal section; belongs to the HAD-like hydrolase superfamily.

Its subcellular location is the mitochondrion. The protein resides in the cytoplasm. It catalyses the reaction thiamine phosphate + H2O = thiamine + phosphate. It carries out the reaction 4-amino-5-aminomethyl-2-methylpyrimidine + H2O = 4-amino-5-hydroxymethyl-2-methylpyrimidine + NH4(+). In terms of biological role, may be involved in the salvage of thiamine breakdown products. This protein has a haloacid dehalogenase family domain fused to its TenA domain. Phosphatase with the highest activity against thiamine monophosphate (ThMP) and, with a lower activity, against thiamine diphosphate (ThDP), flavin mononucleotide, inorganic pyrophosphate, CTP and dATP. Has a thiamine salvage hydrolase activity, but only against 4-amino-5-aminomethyl-2-methylpyrimidine (amino-HMP) and not against N-formylamino-HMP, desthiothiamine, thiamine, ThMP, and ThDP. The sequence is that of Bifunctional TH2 protein, mitochondrial from Arabidopsis thaliana (Mouse-ear cress).